The following is a 318-amino-acid chain: Petal death protein (318 aa).

Residues 1–3 constitute a propeptide, removed in mature form; it reads MAP. Positions 1–24 are disordered; that stretch reads MAPPNGTTNGETEVATQGSYTAVS. 3 residues coordinate Mg(2+): Asp-107, Asp-109, and Lys-142.

The protein belongs to the isocitrate lyase/PEP mutase superfamily. As to quaternary structure, homodimer and homotetramer formed by a dimer of homodimer. Mg(2+) is required as a cofactor. The cofactor is Mn(2+). Requires Fe(2+) as cofactor. It depends on Co(2+) as a cofactor. In terms of tissue distribution, accumulates in senescing flower petals.

It catalyses the reaction oxaloacetate + H2O = oxalate + acetate + H(+). Its function is as follows. Catalyzes cleavage of the C(2)-C(3) bond in oxaloacetate and in (2R)-alkyl malate derivatives to form oxalate and acetate, and alkyl carboxylates and R-ketocarboxylates, respectively. The chain is Petal death protein from Dianthus caryophyllus (Carnation).